Consider the following 77-residue polypeptide: Acyl carrier protein (77 aa).

In terms of domain architecture, Carrier spans 2 to 77 (STIEERVKKI…EAIDYVVSHQ (76 aa)). Residue serine 37 is modified to O-(pantetheine 4'-phosphoryl)serine.

It belongs to the acyl carrier protein (ACP) family. In terms of processing, 4'-phosphopantetheine is transferred from CoA to a specific serine of apo-ACP by AcpS. This modification is essential for activity because fatty acids are bound in thioester linkage to the sulfhydryl of the prosthetic group.

It is found in the cytoplasm. The protein operates within lipid metabolism; fatty acid biosynthesis. Its function is as follows. Carrier of the growing fatty acid chain in fatty acid biosynthesis. The polypeptide is Acyl carrier protein (Oceanospirillum linum).